The chain runs to 547 residues: ARVCEERGGPAAIMQRRVFVVGVGMTKFAKPSENSVDYPDLAKEAGQKALADAGIPYSAVEQACVGYVYGDSTCGQRAIYHGLGLTGIPIINVNNNCATGSTALFMSRQLVEGGLADCVLALGFERMAKGSLASGFSDRTNPMDKHLEIMINKYGLASAPITPQMFANAGKEHMEKYGTNPEYFAKIAWKNHSHSTNNPYSQFQKKYTLDEVLQSRKVFDFLTVLQCCPTSNGAAAAILASEDFVKRHKLQPQAVEILAQVMATDYPSTFEENSCMKMVGYDMTKKAAEKCFKKAGLKPTDVDVIELHDCFSVNEFITYEALGLCPEGKACDLIDRGDNTYGGKWVINPSGGLISKGHPLGATGLAQSAELCWQLRGLAGRREVGGARRALQHNLGLGGAVVVTLYAMGFPGAASDGGVTAVPLSAAVDGFKSHLVFKEIEKKLQEEGEQFVKKIGGVFAFKIKDGPGGKEATWVVDVKNGKGSVAVNSDKKADCTITMADTDLLALMTGKMNPQTAFFQGKLKISGNMGMAMKLQNLQLQPGKAKL.

Residues 433–543 (SHLVFKEIEK…KLQNLQLQPG (111 aa)) form the SCP2 domain. The short motif at 545–547 (AKL) is the Microbody targeting signal element.

The protein in the N-terminal section; belongs to the thiolase-like superfamily. Thiolase family. PreSCP2, a protein with a molecular mass of about 15 kDa, is processed into its mature form (SCP2) by proteolytic cleavage of a 20 residue leader sequence after translocation into peroxisomes. In terms of tissue distribution, expressed at high levels in the liver, intestine and ovarian granulosa cells.

The protein localises to the peroxisome. It localises to the cytoplasm. The protein resides in the mitochondrion. It is found in the endoplasmic reticulum. It carries out the reaction choloyl-CoA + propanoyl-CoA = 3alpha,7alpha,12alpha-trihydroxy-24-oxo-5beta-cholestan-26-oyl-CoA + CoA. The enzyme catalyses an acyl-CoA + acetyl-CoA = a 3-oxoacyl-CoA + CoA. The catalysed reaction is hexanoyl-CoA + acetyl-CoA = 3-oxooctanoyl-CoA + CoA. It catalyses the reaction tetradecanoyl-CoA + acetyl-CoA = 3-oxohexadecanoyl-CoA + CoA. It carries out the reaction 3-oxohexadecanedioyl-CoA + CoA = tetradecanedioyl-CoA + acetyl-CoA. The enzyme catalyses propanoyl-CoA + tetradecanoyl-CoA = 3-oxo-2-methylhexadecanoyl-CoA + CoA. The catalysed reaction is butanoyl-CoA + acetyl-CoA = 3-oxohexanoyl-CoA + CoA. It catalyses the reaction octanoyl-CoA + acetyl-CoA = 3-oxodecanoyl-CoA + CoA. It carries out the reaction decanoyl-CoA + acetyl-CoA = 3-oxododecanoyl-CoA + CoA. The enzyme catalyses dodecanoyl-CoA + acetyl-CoA = 3-oxotetradecanoyl-CoA + CoA. The catalysed reaction is hexadecanoyl-CoA + acetyl-CoA = 3-oxooctadecanoyl-CoA + CoA. It catalyses the reaction 3-oxo-(9Z-octadecenoyl)-CoA + CoA = (7Z)-hexadecenoyl-CoA + acetyl-CoA. It carries out the reaction 7-dehydrocholesterol(in) = 7-dehydrocholesterol(out). In terms of biological role, plays a crucial role in the peroxisomal oxidation of branched-chain fatty acids. Catalyzes the last step of the peroxisomal beta-oxidation of branched chain fatty acids and the side chain of the bile acid intermediates di- and trihydroxycoprostanic acids (DHCA and THCA). Also active with medium and long straight chain 3-oxoacyl-CoAs. Stimulates the microsomal conversion of 7-dehydrocholesterol to cholesterol and transfers phosphatidylcholine and 7-dehydrocholesterol between membrances, in vitro. Isoforms SCP2 and SCPx cooperate in peroxisomal oxidation of certain naturally occurring tetramethyl-branched fatty acyl-CoAs. Functionally, mediates the transfer of all common phospholipids, cholesterol and gangliosides from the endoplasmic reticulum to the plasma membrane. May play a role in regulating steroidogenesis. Stimulates the microsomal conversion of 7-dehydrocholesterol to cholesterol. Also binds fatty acids and fatty acyl Coenzyme A (CoA) such as phytanoyl-CoA. Involved in the regulation phospholipid synthesis in endoplasmic reticulum enhancing the incorporation of exogenous fatty acid into glycerides. Seems to stimulate the rate-limiting step in phosphatidic acid formation mediated by GPAT3. Isoforms SCP2 and SCPx cooperate in peroxisomal oxidation of certain naturally occurring tetramethyl-branched fatty acyl-CoAs. The polypeptide is Sterol carrier protein 2 (SCP2) (Gallus gallus (Chicken)).